The following is a 500-amino-acid chain: Monocarboxylate transporter 1 (500 aa).

Over 1–22 the chain is Cytoplasmic; it reads MPPAVGGPVGYTPPDGGWGWAV. A helical transmembrane segment spans residues 23–44; it reads VIGAFISIGFSYAFPKSITVFF. Lys-38 is a (S)-lactate binding site. The Extracellular portion of the chain corresponds to 45 to 55; sequence KEIEGIFHATT. A helical membrane pass occupies residues 56-80; sequence SEVSWISSIMLAVMYGGGPISSILV. The Cytoplasmic portion of the chain corresponds to 81–84; it reads NKYG. A helical membrane pass occupies residues 85–105; it reads SRIVMIVGGCLSGCGLIAASF. Residues 106 to 109 are Extracellular-facing; that stretch reads CNTV. A helical membrane pass occupies residues 110-132; the sequence is QQLYVCIGVIGGLGLAFNLNPAL. Over 133-146 the chain is Cytoplasmic; sequence TMIGKYFYKRRPLA. The chain crosses the membrane as a helical span at residues 147–169; sequence NGLAMAGSPVFLCTLAPLNQVFF. The Extracellular portion of the chain corresponds to 170–174; it reads GIFGW. The chain crosses the membrane as a helical span at residues 175–194; sequence RGSFLILGGLLLNCCVAGAL. Residues 195–261 are Cytoplasmic-facing; sequence MRPIGPKPTK…FLDLTLFTHR (67 aa). Residues Ser-210 and Ser-213 each carry the phosphoserine modification. At Thr-231 the chain carries Phosphothreonine. A helical membrane pass occupies residues 262-288; sequence GFLLYLSGNVIMFFGLFAPLVFLSSYG. Residues 289–295 are Extracellular-facing; it reads KSQHYSS. A helical membrane pass occupies residues 296–317; it reads EKSAFLLSILAFVDMVARPSMG. Asp-309 is a binding site for H(+). Arg-313 is a (S)-lactate binding site. At 318-328 the chain is on the cytoplasmic side; that stretch reads LVANTKPIRPR. Residues 329-349 form a helical membrane-spanning segment; it reads IQYFFAASVVANGVCHMLAPL. Topologically, residues 350 to 353 are extracellular; the sequence is STTY. A helical membrane pass occupies residues 354–375; sequence VGFCVYAGFFGFAFGWLSSVLF. At 376-389 the chain is on the cytoplasmic side; sequence ETLMDLVGPQRFSS. Residues 390 to 410 traverse the membrane as a helical segment; sequence AVGLVTIVECCPVLLGPPLLG. The Extracellular portion of the chain corresponds to 411-421; sequence RLNDMYGDYKY. The chain crosses the membrane as a helical span at residues 422–443; the sequence is TYWACGVVLIISGIYLFIGMGI. The Cytoplasmic portion of the chain corresponds to 444–500; sequence NYRLLAKEQKANEQKKESKEEETSIDVAGKPNEVTKAAESPDQKDTDGGPKEEESPV. Residues 454-465 show a composition bias toward basic and acidic residues; sequence ANEQKKESKEEE. The disordered stretch occupies residues 454–500; the sequence is ANEQKKESKEEETSIDVAGKPNEVTKAAESPDQKDTDGGPKEEESPV. Ser-461 bears the Phosphoserine mark. Residue Thr-466 is modified to Phosphothreonine. Phosphoserine occurs at positions 467, 483, and 498. Over residues 482–500 the composition is skewed to basic and acidic residues; that stretch reads ESPDQKDTDGGPKEEESPV.

Belongs to the major facilitator superfamily. Monocarboxylate porter (TC 2.A.1.13) family. Interacts with EMB; interaction mediates SLC16A1 targeting to the plasma membrane. Interacts with isoform 2 of BSG; interaction mediates SLC16A1 targeting to the plasma membrane. In terms of tissue distribution, widely expressed. Detected in heart and in blood lymphocytes and monocytes (at protein level).

The protein resides in the cell membrane. Its subcellular location is the basolateral cell membrane. It is found in the apical cell membrane. It carries out the reaction (S)-lactate(in) + H(+)(in) = (S)-lactate(out) + H(+)(out). It catalyses the reaction acetate(out) + H(+)(out) = acetate(in) + H(+)(in). The enzyme catalyses acetoacetate(out) + H(+)(out) = acetoacetate(in) + H(+)(in). The catalysed reaction is pyruvate(out) + H(+)(out) = pyruvate(in) + H(+)(in). It carries out the reaction (R)-3-hydroxybutanoate(out) + H(+)(out) = (R)-3-hydroxybutanoate(in) + H(+)(in). It catalyses the reaction 3-methyl-2-oxobutanoate(out) + H(+)(out) = 3-methyl-2-oxobutanoate(in) + H(+)(in). The enzyme catalyses 4-methyl-2-oxopentanoate(out) + H(+)(out) = 4-methyl-2-oxopentanoate(in) + H(+)(in). The catalysed reaction is succinate(in) + 2 H(+)(in) = succinate(out) + 2 H(+)(out). Selectively inhibited by AZD3965, that acts as a competitive inhibitor binding to the central channel in the outward open conformation. Its function is as follows. Bidirectional proton-coupled monocarboxylate transporter. Catalyzes the rapid transport across the plasma membrane of many monocarboxylates such as lactate, pyruvate, acetate and the ketone bodies acetoacetate and beta-hydroxybutyrate, and thus contributes to the maintenance of intracellular pH. The transport direction is determined by the proton motive force and the concentration gradient of the substrate monocarboxylate. MCT1 is a major lactate exporter. Plays a role in cellular responses to a high-fat diet by modulating the cellular levels of lactate and pyruvate that contribute to the regulation of central metabolic pathways and insulin secretion, with concomitant effects on plasma insulin levels and blood glucose homeostasis. Facilitates the protonated monocarboxylate form of succinate export, that its transient protonation upon muscle cell acidification in exercising muscle and ischemic heart. Functions via alternate outward- and inward-open conformation states. Protonation and deprotonation of 309-Asp is essential for the conformational transition. This chain is Monocarboxylate transporter 1, found in Homo sapiens (Human).